The primary structure comprises 139 residues: Large ribosomal subunit protein uL16 (139 aa).

Belongs to the universal ribosomal protein uL16 family. In terms of assembly, part of the 50S ribosomal subunit.

Functionally, binds 23S rRNA and is also seen to make contacts with the A and possibly P site tRNAs. The protein is Large ribosomal subunit protein uL16 of Treponema denticola (strain ATCC 35405 / DSM 14222 / CIP 103919 / JCM 8153 / KCTC 15104).